We begin with the raw amino-acid sequence, 126 residues long: UPF0344 protein ABC2900 (126 aa).

The next 4 membrane-spanning stretches (helical) occupy residues A16–F36, A43–A63, L66–I86, and G104–I124.

Belongs to the UPF0344 family.

Its subcellular location is the cell membrane. In Shouchella clausii (strain KSM-K16) (Alkalihalobacillus clausii), this protein is UPF0344 protein ABC2900.